Here is a 366-residue protein sequence, read N- to C-terminus: Phospho-N-acetylmuramoyl-pentapeptide-transferase (366 aa).

10 consecutive transmembrane segments (helical) span residues 3-23 (QIFI…PVLI), 55-75 (IAIL…GLVF), 80-100 (PGVS…VGFA), 118-138 (AKLI…LQFP), 161-181 (IAVG…NIVI), 197-217 (LASG…FWQF), 235-255 (PLDL…FLWW), 262-282 (IFMG…LSIT), 287-307 (LLMI…VIQV), and 341-361 (FWLL…GEWL).

It belongs to the glycosyltransferase 4 family. MraY subfamily. Mg(2+) is required as a cofactor.

Its subcellular location is the cell membrane. The catalysed reaction is UDP-N-acetyl-alpha-D-muramoyl-L-alanyl-gamma-D-glutamyl-meso-2,6-diaminopimeloyl-D-alanyl-D-alanine + di-trans,octa-cis-undecaprenyl phosphate = di-trans,octa-cis-undecaprenyl diphospho-N-acetyl-alpha-D-muramoyl-L-alanyl-D-glutamyl-meso-2,6-diaminopimeloyl-D-alanyl-D-alanine + UMP. The protein operates within cell wall biogenesis; peptidoglycan biosynthesis. Catalyzes the initial step of the lipid cycle reactions in the biosynthesis of the cell wall peptidoglycan: transfers peptidoglycan precursor phospho-MurNAc-pentapeptide from UDP-MurNAc-pentapeptide onto the lipid carrier undecaprenyl phosphate, yielding undecaprenyl-pyrophosphoryl-MurNAc-pentapeptide, known as lipid I. This Corynebacterium urealyticum (strain ATCC 43042 / DSM 7109) protein is Phospho-N-acetylmuramoyl-pentapeptide-transferase.